Reading from the N-terminus, the 67-residue chain is Histone H2A (67 aa).

Gln-60 is modified (N5-methylglutamine).

This sequence belongs to the histone H2A family. As to quaternary structure, the nucleosome is a histone octamer containing two molecules each of H2A, H2B, H3 and H4 assembled in one H3-H4 heterotetramer and two H2A-H2B heterodimers. The octamer wraps approximately 147 bp of DNA.

It is found in the nucleus. The protein localises to the chromosome. Core component of nucleosome. Nucleosomes wrap and compact DNA into chromatin, limiting DNA accessibility to the cellular machineries which require DNA as a template. Histones thereby play a central role in transcription regulation, DNA repair, DNA replication and chromosomal stability. DNA accessibility is regulated via a complex set of post-translational modifications of histones, also called histone code, and nucleosome remodeling. This Olisthodiscus luteus (Marine phytoflagellate) protein is Histone H2A.